We begin with the raw amino-acid sequence, 513 residues long: ATP synthase subunit alpha (513 aa).

An ATP-binding site is contributed by 169–176; the sequence is GDRQCGKT.

Belongs to the ATPase alpha/beta chains family. In terms of assembly, F-type ATPases have 2 components, CF(1) - the catalytic core - and CF(0) - the membrane proton channel. CF(1) has five subunits: alpha(3), beta(3), gamma(1), delta(1), epsilon(1). CF(0) has three main subunits: a(1), b(2) and c(9-12). The alpha and beta chains form an alternating ring which encloses part of the gamma chain. CF(1) is attached to CF(0) by a central stalk formed by the gamma and epsilon chains, while a peripheral stalk is formed by the delta and b chains.

The protein resides in the cell inner membrane. It carries out the reaction ATP + H2O + 4 H(+)(in) = ADP + phosphate + 5 H(+)(out). In terms of biological role, produces ATP from ADP in the presence of a proton gradient across the membrane. The alpha chain is a regulatory subunit. The chain is ATP synthase subunit alpha from Burkholderia ambifaria (strain MC40-6).